Here is a 332-residue protein sequence, read N- to C-terminus: UDP-3-O-acylglucosamine N-acyltransferase (332 aa).

H231 serves as the catalytic Proton acceptor.

The protein belongs to the transferase hexapeptide repeat family. LpxD subfamily. In terms of assembly, homotrimer.

It catalyses the reaction a UDP-3-O-[(3R)-3-hydroxyacyl]-alpha-D-glucosamine + a (3R)-hydroxyacyl-[ACP] = a UDP-2-N,3-O-bis[(3R)-3-hydroxyacyl]-alpha-D-glucosamine + holo-[ACP] + H(+). It participates in bacterial outer membrane biogenesis; LPS lipid A biosynthesis. In terms of biological role, catalyzes the N-acylation of UDP-3-O-acylglucosamine using 3-hydroxyacyl-ACP as the acyl donor. Is involved in the biosynthesis of lipid A, a phosphorylated glycolipid that anchors the lipopolysaccharide to the outer membrane of the cell. The polypeptide is UDP-3-O-acylglucosamine N-acyltransferase (Vesicomyosocius okutanii subsp. Calyptogena okutanii (strain HA)).